Here is a 1430-residue protein sequence, read N- to C-terminus: ABC transporter eupT (1430 aa).

The tract at residues 1-26 (MAPAIDSTVNDLQPNTPNPEKALSSQ) is disordered. Positions 112-368 (LALPAMIRQL…FVNLGFECPA (257 aa)) constitute an ABC transporter 1 domain. An N-linked (GlcNAc...) asparagine glycan is attached at Asn292. 5 helical membrane-spanning segments follow: residues 476–496 (WPAV…SSLF), 511–531 (VVLF…VMTL), 557–577 (VLVD…VFYF), 586–606 (GNFF…SGVF), and 620–640 (MVPA…VVPV). An N-linked (GlcNAc...) asparagine glycan is attached at Asn684. A helical transmembrane segment spans residues 707–727 (VGIIIAMVIFNYLMYFIASEY). One can recognise an ABC transporter 2 domain in the interval 789 to 1032 (FHWNNVCYDL…TLIDYFERNG (244 aa)). 825–832 (GVSGAGKT) provides a ligand contact to ATP. Asn1019 carries N-linked (GlcNAc...) asparagine glycosylation. The next 6 membrane-spanning stretches (helical) occupy residues 1133-1153 (ITLC…APLS), 1213-1233 (LPWS…PIGF), 1249-1269 (LMWL…HMCI), 1278-1298 (GGNI…VLAS), 1305-1325 (FWIF…VLST), and 1400-1420 (FGIL…LYWI).

This sequence belongs to the ABC transporter superfamily. ABCG family. PDR (TC 3.A.1.205) subfamily.

The protein localises to the cell membrane. Functionally, ABC transporter; part of the gene cluster that mediates the biosynthesis of eupenifeldin, a bistropolone meroterpenoid that acts as an antitumor agent. This is ABC transporter eupT from Phoma sp.